We begin with the raw amino-acid sequence, 293 residues long: Ribosomal protein L11 methyltransferase (293 aa).

Residues Thr-144, Gly-165, Asp-187, and Asn-228 each contribute to the S-adenosyl-L-methionine site.

This sequence belongs to the methyltransferase superfamily. PrmA family.

It is found in the cytoplasm. The catalysed reaction is L-lysyl-[protein] + 3 S-adenosyl-L-methionine = N(6),N(6),N(6)-trimethyl-L-lysyl-[protein] + 3 S-adenosyl-L-homocysteine + 3 H(+). Methylates ribosomal protein L11. This is Ribosomal protein L11 methyltransferase from Methylococcus capsulatus (strain ATCC 33009 / NCIMB 11132 / Bath).